Here is a 356-residue protein sequence, read N- to C-terminus: D-alanine--D-alanine ligase (356 aa).

Residues 134 to 339 form the ATP-grasp domain; that stretch reads KQLFEHRGLP…YPELITKLIE (206 aa). 167-222 contacts ATP; the sequence is NDKLNYPVFVKPANLGSSVGISKCNNEAELKEGIKEAFQFDRKLVIEQGVNAREIE. Mg(2+) is bound by residues Asp-293, Glu-306, and Asn-308.

Belongs to the D-alanine--D-alanine ligase family. The cofactor is Mg(2+). Requires Mn(2+) as cofactor.

It localises to the cytoplasm. The enzyme catalyses 2 D-alanine + ATP = D-alanyl-D-alanine + ADP + phosphate + H(+). Its pathway is cell wall biogenesis; peptidoglycan biosynthesis. Functionally, cell wall formation. In Staphylococcus aureus (strain MSSA476), this protein is D-alanine--D-alanine ligase.